A 490-amino-acid polypeptide reads, in one-letter code: Secretory immunoglobulin A-binding protein EsiB (490 aa).

Positions Met-1–Gly-23 are cleaved as a signal peptide. Sel1-like repeat units lie at residues Ala-39–Tyr-74, Ala-77–Gly-109, Pro-111–Gly-145, Met-153–Asn-182, Ser-185–Asp-218, Gln-222–Asn-254, Ile-256–Asn-290, Ser-291–Asp-327, Ala-328–Gly-361, Ala-364–Gly-397, and Ser-399–Ser-430. Mg(2+) is bound by residues His-122, Glu-159, and Asp-161.

Interacts with human secreted IgA (SIgA) at least via resides 244-260. The cofactor is Mg(2+).

It is found in the cell surface. Its function is as follows. Upon host (human neutrophil) infection interferes with productive FCAR signaling, inhibiting secreted IgA (SIgA) effector functions and probably avoiding neutrophil activation. Inhibits the SIgA-mediated oxidative burst by neutrophils, decreases generation of ROS (reactive oxygen species) by neutrophils and reduces chemotaxis by neutrophils, all of which are SIgA effector functions used to stimulate the immune response. Does not block SIgA-binding to its receptor (FCAR) on neutrophils, but it decreases SIgA-stimulated phosphorylation of cytoplasmic proteins, including phospholipase C-gamma and MAP kinases, all actions that may be advantageous to the pathogen. This is Secretory immunoglobulin A-binding protein EsiB from Escherichia coli O6:H1 (strain CFT073 / ATCC 700928 / UPEC).